A 199-amino-acid polypeptide reads, in one-letter code: Pyridoxal 5'-phosphate synthase subunit PdxT (199 aa).

Residue 49-51 (GES) coordinates L-glutamine. The active-site Nucleophile is C81. L-glutamine-binding positions include R110 and 139 to 140 (IR). Active-site charge relay system residues include H175 and E177.

The protein belongs to the glutaminase PdxT/SNO family. In the presence of PdxS, forms a dodecamer of heterodimers. Only shows activity in the heterodimer.

It catalyses the reaction aldehydo-D-ribose 5-phosphate + D-glyceraldehyde 3-phosphate + L-glutamine = pyridoxal 5'-phosphate + L-glutamate + phosphate + 3 H2O + H(+). The enzyme catalyses L-glutamine + H2O = L-glutamate + NH4(+). It participates in cofactor biosynthesis; pyridoxal 5'-phosphate biosynthesis. Catalyzes the hydrolysis of glutamine to glutamate and ammonia as part of the biosynthesis of pyridoxal 5'-phosphate. The resulting ammonia molecule is channeled to the active site of PdxS. The polypeptide is Pyridoxal 5'-phosphate synthase subunit PdxT (Frankia casuarinae (strain DSM 45818 / CECT 9043 / HFP020203 / CcI3)).